The primary structure comprises 124 residues: Ribonuclease pancreatic (124 aa).

Over residues 1–13 (KESAAAKFERQHI) the composition is skewed to basic and acidic residues. The segment at 1 to 23 (KESAAAKFERQHIDSSTSSVSSS) is disordered. Lys-7 and Arg-10 together coordinate substrate. Residue His-12 is the Proton acceptor of the active site. Cystine bridges form between Cys-26–Cys-84, Cys-40–Cys-95, Cys-58–Cys-110, and Cys-65–Cys-72. N-linked (GlcNAc...) asparagine glycosylation is present at Asn-34. Residues 41–45 (KPVNT), Lys-66, and Arg-85 contribute to the substrate site. The active-site Proton donor is His-119.

The protein belongs to the pancreatic ribonuclease family. Monomer. Interacts with and forms tight 1:1 complexes with RNH1. Dimerization of two such complexes may occur. Interaction with RNH1 inhibits this protein. In terms of tissue distribution, pancreas.

Its subcellular location is the secreted. It catalyses the reaction an [RNA] containing cytidine + H2O = an [RNA]-3'-cytidine-3'-phosphate + a 5'-hydroxy-ribonucleotide-3'-[RNA].. The enzyme catalyses an [RNA] containing uridine + H2O = an [RNA]-3'-uridine-3'-phosphate + a 5'-hydroxy-ribonucleotide-3'-[RNA].. In terms of biological role, endonuclease that catalyzes the cleavage of RNA on the 3' side of pyrimidine nucleotides. Acts on single-stranded and double-stranded RNA. The sequence is that of Ribonuclease pancreatic (RNASE1) from Giraffa camelopardalis (Giraffe).